The sequence spans 72 residues: Translation initiation factor IF-1 (72 aa).

Residues 1–72 (MAKEESIEVE…SKGRITYRYK (72 aa)) enclose the S1-like domain.

This sequence belongs to the IF-1 family. As to quaternary structure, component of the 30S ribosomal translation pre-initiation complex which assembles on the 30S ribosome in the order IF-2 and IF-3, IF-1 and N-formylmethionyl-tRNA(fMet); mRNA recruitment can occur at any time during PIC assembly.

It is found in the cytoplasm. One of the essential components for the initiation of protein synthesis. Stabilizes the binding of IF-2 and IF-3 on the 30S subunit to which N-formylmethionyl-tRNA(fMet) subsequently binds. Helps modulate mRNA selection, yielding the 30S pre-initiation complex (PIC). Upon addition of the 50S ribosomal subunit IF-1, IF-2 and IF-3 are released leaving the mature 70S translation initiation complex. This Chlorobaculum tepidum (strain ATCC 49652 / DSM 12025 / NBRC 103806 / TLS) (Chlorobium tepidum) protein is Translation initiation factor IF-1.